The chain runs to 424 residues: Enolase (424 aa).

Gln-163 serves as a coordination point for (2R)-2-phosphoglycerate. The active-site Proton donor is the Glu-205. Mg(2+) is bound by residues Asp-242, Glu-285, and Asp-312. 4 residues coordinate (2R)-2-phosphoglycerate: Lys-337, Arg-366, Ser-367, and Lys-388. Residue Lys-337 is the Proton acceptor of the active site.

This sequence belongs to the enolase family. Requires Mg(2+) as cofactor.

The protein localises to the cytoplasm. It is found in the secreted. The protein resides in the cell surface. The catalysed reaction is (2R)-2-phosphoglycerate = phosphoenolpyruvate + H2O. It functions in the pathway carbohydrate degradation; glycolysis; pyruvate from D-glyceraldehyde 3-phosphate: step 4/5. Its function is as follows. Catalyzes the reversible conversion of 2-phosphoglycerate (2-PG) into phosphoenolpyruvate (PEP). It is essential for the degradation of carbohydrates via glycolysis. This is Enolase from Sphingopyxis alaskensis (strain DSM 13593 / LMG 18877 / RB2256) (Sphingomonas alaskensis).